A 225-amino-acid polypeptide reads, in one-letter code: Histone H1.11L (225 aa).

2 stretches are compositionally biased toward low complexity: residues 1 to 23 (MSET…PAKA) and 31 to 43 (AAGG…PAGP). 2 disordered regions span residues 1-46 (MSET…PSVT) and 94-225 (SKGT…AKKK). N-acetylserine is present on serine 2. The region spanning 41 to 114 (AGPSVTELIT…GASGSFRLSK (74 aa)) is the H15 domain. Composition is skewed to basic residues over residues 123–138 (APKK…KPAA), 146–163 (KKPK…KAKK), 171–189 (KSAK…KKAV), and 198–225 (KAVK…AKKK).

The protein belongs to the histone H1/H5 family.

The protein localises to the nucleus. Its subcellular location is the chromosome. Functionally, histones H1 are necessary for the condensation of nucleosome chains into higher-order structures. This chain is Histone H1.11L, found in Gallus gallus (Chicken).